The sequence spans 105 residues: uncharacterized protein (105 aa).

Residues 2–42 enclose the Helicase C-terminal domain; that stretch reads QVLIGTKLVTEGIDIKQLMMVIMLDNRLNIIELIQGVGRLR.

Belongs to the helicase family. Yeast subtelomeric Y' repeat subfamily.

This is an uncharacterized protein from Saccharomyces cerevisiae (strain ATCC 204508 / S288c) (Baker's yeast).